Here is a 334-residue protein sequence, read N- to C-terminus: Ornithine carbamoyltransferase subunit I (334 aa).

Residues S56–T59, Q83, R107, and H134–Q137 contribute to the carbamoyl phosphate site. Residues N168, D232, and S236 to M237 each bind L-ornithine. Zn(2+) is bound at residue C274. Carbamoyl phosphate-binding positions include C274–L275 and R320.

This sequence belongs to the aspartate/ornithine carbamoyltransferase superfamily. OTCase family. In E.coli strain K12, trimer of identical or non-identical chains are composed of ArgI (I) and/or ArgF (F). The trimer has the following composition: FFI, FFF, FII, III. E.coli strains B and W, which are known to contain only ArgI, produce only a trimer of identical chains (III).

It localises to the cytoplasm. It carries out the reaction carbamoyl phosphate + L-ornithine = L-citrulline + phosphate + H(+). It participates in amino-acid biosynthesis; L-arginine biosynthesis; L-arginine from L-ornithine and carbamoyl phosphate: step 1/3. With respect to regulation, reversely inhibited by N-(N-Sulfodiaminophosphinyl)-L-ornithine. Zinc is an allosteric regulator of the substrate-bound enzyme and a competitive inhibitor of the free enzyme. Functionally, reversibly catalyzes the transfer of the carbamoyl group from carbamoyl phosphate (CP) to the N(epsilon) atom of ornithine (ORN) to produce L-citrulline, which is a substrate for argininosuccinate synthetase, the enzyme involved in the final step in arginine biosynthesis. The polypeptide is Ornithine carbamoyltransferase subunit I (Escherichia coli (strain K12)).